Reading from the N-terminus, the 75-residue chain is Metallothionein-like protein 1 (75 aa).

It belongs to the metallothionein superfamily. Type 15 family.

Its function is as follows. Metallothioneins have a high content of cysteine residues that bind various heavy metals. The polypeptide is Metallothionein-like protein 1 (MTA) (Pisum sativum (Garden pea)).